A 156-amino-acid chain; its full sequence is MSSRFARSNGNPNHIRKRNHSPDPIGIDNYKRKRLIIDLENLSLNDKGPKNGHADDNNLIHNNIVFTDAIDDKVLKEIIKCSTSKRGDNDLFYDKIWERLREKRLQIIKWVDYKEIAYLSWWKWFHNQMTSKYTYDGEADTDVEMMAVDTDVDMDA.

Over residues 1–12 (MSSRFARSNGNP) the composition is skewed to polar residues. Residues 1-27 (MSSRFARSNGNPNHIRKRNHSPDPIGI) form a disordered region. At S21 the chain carries Phosphoserine.

Its subcellular location is the cytoplasm. It is found in the nucleus. This is an uncharacterized protein from Saccharomyces cerevisiae (strain ATCC 204508 / S288c) (Baker's yeast).